The following is a 333-amino-acid chain: Ribokinase (333 aa).

Substrate contacts are provided by residues 10–12, 38–42, and glutamate 149; these read NYD and GKGLN. ATP is bound by residues asparagine 193 and 248–253; that span reads TLGSRG. K(+)-binding residues include aspartate 277 and threonine 279. Residue 282-283 participates in ATP binding; sequence GD. Aspartate 283 provides a ligand contact to substrate. Aspartate 283 acts as the Proton acceptor in catalysis. K(+) is bound by residues threonine 313, arginine 316, glycine 318, and serine 322.

Belongs to the carbohydrate kinase PfkB family. Ribokinase subfamily. As to quaternary structure, homodimer. Requires Mg(2+) as cofactor.

The protein localises to the cytoplasm. It is found in the nucleus. The enzyme catalyses D-ribose + ATP = D-ribose 5-phosphate + ADP + H(+). Its pathway is carbohydrate metabolism; D-ribose degradation; D-ribose 5-phosphate from beta-D-ribopyranose: step 2/2. With respect to regulation, activated by a monovalent cation that binds near, but not in, the active site. The most likely occupant of the site in vivo is potassium. Ion binding induces a conformational change that may alter substrate affinity. In terms of biological role, catalyzes the phosphorylation of ribose at O-5 in a reaction requiring ATP and magnesium. The resulting D-ribose-5-phosphate can then be used either for sythesis of nucleotides, histidine, and tryptophan, or as a component of the pentose phosphate pathway. This Saccharomyces cerevisiae (strain ATCC 204508 / S288c) (Baker's yeast) protein is Ribokinase.